A 148-amino-acid polypeptide reads, in one-letter code: Small ribosomal subunit protein eS6 (148 aa).

Belongs to the eukaryotic ribosomal protein eS6 family.

This chain is Small ribosomal subunit protein eS6, found in Pyrobaculum arsenaticum (strain DSM 13514 / JCM 11321 / PZ6).